The primary structure comprises 114 residues: T cell receptor beta variable 6-2 (114 aa).

Residues 1 to 21 form the signal peptide; that stretch reads MSLGLLCCGAFSLLWAGPVNA. Residues 22 to 114 form the Ig-like domain; the sequence is GVTQTPKFRV…TSVYFCASSY (93 aa). A disulfide bridge links C42 with C110. N84 carries an N-linked (GlcNAc...) asparagine glycan.

Alpha-beta TR is a heterodimer composed of an alpha and beta chain; disulfide-linked. The alpha-beta TR is associated with the transmembrane signaling CD3 coreceptor proteins to form the TR-CD3 (TcR or TCR). The assembly of alpha-beta TR heterodimers with CD3 occurs in the endoplasmic reticulum where a single alpha-beta TR heterodimer associates with one CD3D-CD3E heterodimer, one CD3G-CD3E heterodimer and one CD247 homodimer forming a stable octameric structure. CD3D-CD3E and CD3G-CD3E heterodimers preferentially associate with TR alpha and TR beta chains, respectively. The association of the CD247 homodimer is the last step of TcR assembly in the endoplasmic reticulum and is required for transport to the cell surface.

Its subcellular location is the cell membrane. In terms of biological role, v region of the variable domain of T cell receptor (TR) beta chain that participates in the antigen recognition. Alpha-beta T cell receptors are antigen specific receptors which are essential to the immune response and are present on the cell surface of T lymphocytes. Recognize peptide-major histocompatibility (MH) (pMH) complexes that are displayed by antigen presenting cells (APC), a prerequisite for efficient T cell adaptive immunity against pathogens. Binding of alpha-beta TR to pMH complex initiates TR-CD3 clustering on the cell surface and intracellular activation of LCK that phosphorylates the ITAM motifs of CD3G, CD3D, CD3E and CD247 enabling the recruitment of ZAP70. In turn ZAP70 phosphorylates LAT, which recruits numerous signaling molecules to form the LAT signalosome. The LAT signalosome propagates signal branching to three major signaling pathways, the calcium, the mitogen-activated protein kinase (MAPK) kinase and the nuclear factor NF-kappa-B (NF-kB) pathways, leading to the mobilization of transcription factors that are critical for gene expression and essential for T cell growth and differentiation. The T cell repertoire is generated in the thymus, by V-(D)-J rearrangement. This repertoire is then shaped by intrathymic selection events to generate a peripheral T cell pool of self-MH restricted, non-autoaggressive T cells. Post-thymic interaction of alpha-beta TR with the pMH complexes shapes TR structural and functional avidity. The chain is T cell receptor beta variable 6-2 from Homo sapiens (Human).